A 168-amino-acid chain; its full sequence is Disulfide bond formation protein B 2 (168 aa).

At 1–14 the chain is on the cytoplasmic side; sequence MSAPIGATRAERWT. A helical transmembrane segment spans residues 15–31; sequence LLAIGVASFELVAGALW. The Periplasmic portion of the chain corresponds to 32-49; that stretch reads IQLAWQEDPCPLCIIQRY. A disulfide bridge links cysteine 41 with cysteine 44. Residues 50–64 traverse the membrane as a helical segment; that stretch reads LFLLIALFTFVAAAG. At 65-69 the chain is on the cytoplasmic side; it reads GRRVA. The chain crosses the membrane as a helical span at residues 70–87; sequence LLRVLSLTTALAGAAVAV. Topologically, residues 88–142 are periplasmic; the sequence is RHIYVQAHPGFSCGFDALQPVIDSLPPAHWLPPVFKVGGLCETLYPPILGLSLPM. Cysteine 100 and cysteine 128 are disulfide-bonded. A helical transmembrane segment spans residues 143 to 161; that stretch reads WALVGFSAIAVALGWRIRA. Over 162–168 the chain is Cytoplasmic; the sequence is QAVIRTA.

Belongs to the DsbB family.

It localises to the cell inner membrane. In terms of biological role, required for disulfide bond formation in some periplasmic proteins. Acts by oxidizing the DsbA protein. The polypeptide is Disulfide bond formation protein B 2 (Burkholderia lata (strain ATCC 17760 / DSM 23089 / LMG 22485 / NCIMB 9086 / R18194 / 383)).